Reading from the N-terminus, the 200-residue chain is Protein GrpE (200 aa).

2 stretches are compositionally biased toward acidic residues: residues 1 to 17 and 34 to 44; these read MNEQPNEELQSEDEQFD and AFAEAGEETRD. The interval 1-49 is disordered; sequence MNEQPNEELQSEDEQFDPQETVSFEGETAANDEAFAEAGEETRDEEMTR.

Belongs to the GrpE family. In terms of assembly, homodimer.

It localises to the cytoplasm. Its function is as follows. Participates actively in the response to hyperosmotic and heat shock by preventing the aggregation of stress-denatured proteins, in association with DnaK and GrpE. It is the nucleotide exchange factor for DnaK and may function as a thermosensor. Unfolded proteins bind initially to DnaJ; upon interaction with the DnaJ-bound protein, DnaK hydrolyzes its bound ATP, resulting in the formation of a stable complex. GrpE releases ADP from DnaK; ATP binding to DnaK triggers the release of the substrate protein, thus completing the reaction cycle. Several rounds of ATP-dependent interactions between DnaJ, DnaK and GrpE are required for fully efficient folding. This chain is Protein GrpE, found in Rhodopirellula baltica (strain DSM 10527 / NCIMB 13988 / SH1).